Here is a 284-residue protein sequence, read N- to C-terminus: MDALSRLLMLNAPQGTIDKNCVLGSDWQLPHGAGELSVIRWHALTQGAAKLEMPTGEIFTLRPGNVVLLPQNSAHRLSHVDNESTCIVCGTLRLQHSARYFLTSLPETLFLAPVNHSVEYNWLREAIPFLQQESRSAMPGVDALCSQICATFFTLAVREWIAQVNTEKNILSLLLHPRLGAVIQQMLEMPGHAWTVESLASIAHMSRASFAQLFRDVSGTTPLAVLTKLRLQIAAQMFSRETLPVVVIAESVGYASESSFHKAFVREFGCTPGEYRERVRQLAP.

C21 and C89 are disulfide-bonded. Residues 177–278 (PRLGAVIQQM…GCTPGEYRER (102 aa)) enclose the HTH araC/xylS-type domain. DNA-binding regions (H-T-H motif) lie at residues 197 to 218 (ESLA…RDVS) and 245 to 268 (VVVI…VREF).

Oxydation of Cys-21 leads to partial activation of RclR, followed by the formation of an intramolecular disulfide bond between Cys-21 and Cys-89, which stabilizes the active form of RclR. Involved in reactive chlorine species (RCS) stress resistance. Up-regulates, in response to hypochlorous acid (HOCl), the expression of three genes essential for survival of RCS stress (rclA, rclB and rclC) and its own expression. This chain is RCS-specific HTH-type transcriptional activator RclR (rclR), found in Escherichia coli (strain K12).